The sequence spans 359 residues: Serine/threonine-protein kinase mos (359 aa).

In terms of domain architecture, Protein kinase spans 63–336; sequence VLLLEPLGSG…LLERLEQECA (274 aa). Residues 69-77 and lysine 90 each bind ATP; that span reads LGSGGFGSV. The Proton acceptor role is filled by aspartate 189.

The protein belongs to the protein kinase superfamily. Ser/Thr protein kinase family.

It is found in the cytoplasm. The catalysed reaction is L-seryl-[protein] + ATP = O-phospho-L-seryl-[protein] + ADP + H(+). It catalyses the reaction L-threonyl-[protein] + ATP = O-phospho-L-threonyl-[protein] + ADP + H(+). Functionally, serine/threonine kinase involved in the regulation of MAPK signaling. The polypeptide is Serine/threonine-protein kinase mos (mos) (Xenopus laevis (African clawed frog)).